Consider the following 115-residue polypeptide: NAD(P)H-quinone oxidoreductase subunit M (115 aa).

The protein belongs to the complex I NdhM subunit family. NDH-1 can be composed of about 15 different subunits; different subcomplexes with different compositions have been identified which probably have different functions.

The protein localises to the cellular thylakoid membrane. It catalyses the reaction a plastoquinone + NADH + (n+1) H(+)(in) = a plastoquinol + NAD(+) + n H(+)(out). The enzyme catalyses a plastoquinone + NADPH + (n+1) H(+)(in) = a plastoquinol + NADP(+) + n H(+)(out). NDH-1 shuttles electrons from an unknown electron donor, via FMN and iron-sulfur (Fe-S) centers, to quinones in the respiratory and/or the photosynthetic chain. The immediate electron acceptor for the enzyme in this species is believed to be plastoquinone. Couples the redox reaction to proton translocation, and thus conserves the redox energy in a proton gradient. Cyanobacterial NDH-1 also plays a role in inorganic carbon-concentration. This chain is NAD(P)H-quinone oxidoreductase subunit M, found in Synechococcus sp. (strain CC9605).